A 3313-amino-acid chain; its full sequence is PHD finger protein rhinoceros (3313 aa).

Positions M1–H16 are enriched in basic residues. The interval M1–Q136 is disordered. Composition is skewed to low complexity over residues P42–G71 and L100–S134. The PHD-type 1 zinc-finger motif lies at N323 to G373. The C2HC pre-PHD-type zinc-finger motif lies at T375–V409. A PHD-type 2; degenerate zinc finger spans residues L433–G487. 17 disordered regions span residues M453 to Q526, L708 to A1076, K1107 to H1842, A1961 to N2033, P2104 to R2136, A2145 to T2164, A2219 to G2252, P2353 to P2374, V2398 to M2514, T2563 to V2587, A2647 to A2679, S2827 to R2871, L2888 to R2954, Y2978 to P2998, D3017 to T3077, K3144 to E3233, and Y3259 to R3313. The segment covering K512–Q526 has biased composition (basic and acidic residues). Residues K735–P749 show a composition bias toward polar residues. The span at S760–A772 shows a compositional bias: low complexity. The span at G792–K802 shows a compositional bias: polar residues. Composition is skewed to low complexity over residues T803–I861 and E894–S912. Over residues Q919–G934 the composition is skewed to basic and acidic residues. Positions T942–S955 are enriched in polar residues. A compositionally biased stretch (low complexity) spans T956–T972. Acidic residues predominate over residues E994–E1003. The span at A1015–G1025 shows a compositional bias: low complexity. Over residues V1058 to R1072 the composition is skewed to polar residues. Composition is skewed to basic and acidic residues over residues A1159–S1168 and K1178–S1205. The segment covering E1250–S1266 has biased composition (low complexity). A compositionally biased stretch (polar residues) spans L1285–E1301. Low complexity-rich tracts occupy residues A1308–T1324, S1377–D1404, and P1451–T1464. Residues T1475–K1485 show a composition bias toward polar residues. Residues S1551 to Q1579 are compositionally biased toward basic and acidic residues. The span at P1638–P1650 shows a compositional bias: acidic residues. Over residues T1667–A1678 the composition is skewed to polar residues. Residues P1691–T1702 show a composition bias toward pro residues. A compositionally biased stretch (basic residues) spans S1722–S1734. A coiled-coil region spans residues H1744–Y1773. The span at E1753 to E1765 shows a compositional bias: basic and acidic residues. Polar residues-rich tracts occupy residues S1771–A1781 and D1796–D1805. Over residues Q1806 to L1819 the composition is skewed to low complexity. The segment covering S1823–I1832 has biased composition (polar residues). Residues Q1965–Q1984 are compositionally biased toward low complexity. Polar residues-rich tracts occupy residues S1985–S1999 and M2007–L2018. The segment covering T2019–N2033 has biased composition (low complexity). Positions T2106–L2118 are enriched in polar residues. Composition is skewed to low complexity over residues S2148–S2157 and Q2222–Q2242. The span at P2439 to A2451 shows a compositional bias: pro residues. A compositionally biased stretch (gly residues) spans G2479–R2488. A compositionally biased stretch (low complexity) spans P2658–A2679. Positions A2891 to S2900 are enriched in gly residues. Over residues C2909 to A2924 the composition is skewed to polar residues. Over residues K2935–T2946 the composition is skewed to basic and acidic residues. Basic and acidic residues predominate over residues D3017–K3026. The segment covering K3046–Q3065 has biased composition (basic residues). The segment covering T3179–A3198 has biased composition (polar residues). The span at S3268–N3290 shows a compositional bias: low complexity. Gly residues predominate over residues G3291–S3302.

It belongs to the JADE family.

It is found in the nucleus. In terms of biological role, may function as a negative regulator of the EGFR/Ras/MAPK signaling pathway during eye development. This is PHD finger protein rhinoceros (rno) from Drosophila pseudoobscura pseudoobscura (Fruit fly).